The chain runs to 249 residues: RING finger protein 223 (249 aa).

The interval 1–44 is disordered; sequence MSSGQQVWHTAVPPPRRSSSIASMPRSPSSAGSPRSPGTPGSER. Low complexity predominate over residues 17–44; it reads RSSSIASMPRSPSSAGSPRSPGTPGSER. The segment at 51–102 adopts an RING-type zinc-finger fold; the sequence is CSICFSGYDNIFKTPKELSCTHVFCLECLARLAAAQPVGRPGGEAVPCPFCR. Residues 199-219 form a helical membrane-spanning segment; the sequence is LVSALLLMLFCVALWPVQCAL. A disordered region spans residues 230-249; the sequence is PPRPPATSTAASPLGPLTDN. The span at 235 to 249 shows a compositional bias: low complexity; the sequence is ATSTAASPLGPLTDN.

It localises to the membrane. The polypeptide is RING finger protein 223 (RNF223) (Homo sapiens (Human)).